A 403-amino-acid chain; its full sequence is Argininosuccinate synthase (403 aa).

ATP is bound by residues 13–21 and alanine 40; that span reads AYSGGLDTS. Residues tyrosine 91 and serine 96 each contribute to the L-citrulline site. Residue glycine 121 coordinates ATP. L-aspartate is bound by residues threonine 123, asparagine 127, and aspartate 128. Asparagine 127 provides a ligand contact to L-citrulline. 5 residues coordinate L-citrulline: arginine 131, serine 180, serine 189, glutamate 265, and tyrosine 277.

The protein belongs to the argininosuccinate synthase family. Type 1 subfamily. Homotetramer.

The protein localises to the cytoplasm. The catalysed reaction is L-citrulline + L-aspartate + ATP = 2-(N(omega)-L-arginino)succinate + AMP + diphosphate + H(+). It functions in the pathway amino-acid biosynthesis; L-arginine biosynthesis; L-arginine from L-ornithine and carbamoyl phosphate: step 2/3. The protein is Argininosuccinate synthase of Leptospira interrogans serogroup Icterohaemorrhagiae serovar Lai (strain 56601).